The sequence spans 225 residues: Membrin-11 (225 aa).

Residue Ala2 is modified to N-acetylalanine. Topologically, residues 2 to 200 (ASGIVEGGGS…VLRLIERRNR (199 aa)) are cytoplasmic. Residues 201–221 (VDTWIKYAGMIATLVILYLFI) traverse the membrane as a helical; Anchor for type IV membrane protein segment. At 222 to 225 (RWTR) the chain is on the vesicular side.

Belongs to the GOSR2 family.

The protein resides in the golgi apparatus membrane. Its function is as follows. Involved in transport of proteins from the cis/medial-Golgi to the trans-Golgi network. The protein is Membrin-11 (MEMB11) of Arabidopsis thaliana (Mouse-ear cress).